The following is a 363-amino-acid chain: Hydroxycarboxylic acid receptor 2 (363 aa).

Over 1–33 (MNRHHLQDHFLEIDKKNCCVFRDDFIVKVLPPV) the chain is Extracellular. A helical transmembrane segment spans residues 34-54 (LGLEFIFGLLGNGLALWIFCF). At 55 to 63 (HLKSWKSSR) the chain is on the cytoplasmic side. Residues 64–84 (IFLFNLAVADFLLIICLPFLM) traverse the membrane as a helical segment. Residues 85–102 (DNYVRRWDWKFGDIPCRL) lie on the Extracellular side of the membrane. A disulfide bond links cysteine 100 and cysteine 177. A helical transmembrane segment spans residues 103–123 (MLFMLAMNRQGSIIFLTVVAV). Residues 124–142 (DRYFRVVHPHHALNKISNR) lie on the Cytoplasmic side of the membrane. Residues 143-163 (TAAIISCLLWGITIGLTVHLL) traverse the membrane as a helical segment. Topologically, residues 164–192 (KKKMPIQNGGANLCSSFSICHTFQWHEAM) are extracellular. The chain crosses the membrane as a helical span at residues 193–213 (FLLEFFLPLGIILFCSARIIW). Residues 214–229 (SLRQRQMDRHAKIKRA) are Cytoplasmic-facing. A helical transmembrane segment spans residues 230–250 (ITFIMVVAIVFVICFLPSVVV). Residues 251–273 (RIRIFWLLHTSGTQNCEVYRSVD) are Extracellular-facing. Residues 274–294 (LAFFITLSFTYMNSMLDPVVY) traverse the membrane as a helical segment. Residues 295 to 363 (YFSSPSFPNF…SPSYLGPTSP (69 aa)) are Cytoplasmic-facing. The tract at residues 319-363 (GEPDNNRSTSVELTGDPNKTRGAPEALMANSGEPWSPSYLGPTSP) is disordered. Serine 328 bears the Phosphoserine mark.

Belongs to the G-protein coupled receptor 1 family. As to expression, expression largely restricted to adipose tissue and spleen. Expressed on mature neutrophils but not on immature neutrophils or eosinophils.

Its subcellular location is the cell membrane. In terms of biological role, acts as a high affinity receptor for both nicotinic acid (also known as niacin) and (D)-beta-hydroxybutyrate and mediates increased adiponectin secretion and decreased lipolysis through G(i)-protein-mediated inhibition of adenylyl cyclase. This pharmacological effect requires nicotinic acid doses that are much higher than those provided by a normal diet. Mediates nicotinic acid-induced apoptosis in mature neutrophils. Receptor activation by nicotinic acid results in reduced cAMP levels which may affect activity of cAMP-dependent protein kinase A and phosphorylation of target proteins, leading to neutrophil apoptosis. The rank order of potency for the displacement of nicotinic acid binding is 5-methyl pyrazole-3-carboxylic acid = pyridine-3-acetic acid &gt; acifran &gt; 5-methyl nicotinic acid = acipimox &gt;&gt; nicotinuric acid = nicotinamide. This Homo sapiens (Human) protein is Hydroxycarboxylic acid receptor 2 (HCAR2).